We begin with the raw amino-acid sequence, 371 residues long: Cytochrome b (371 aa).

4 helical membrane passes run 25–45 (FGSM…FLAV), 69–90 (WMMQ…YIHI), 105–125 (WMSG…GYVL), and 170–190 (FFAL…LHVI). 2 residues coordinate heme b: His75 and His89. 2 residues coordinate heme b: His174 and His188. His193 lines the a ubiquinone pocket. 4 helical membrane-spanning segments follow: residues 218–238 (YKDL…VSFF), 280–300 (LGGA…PFTH), 312–332 (LSQL…WAAT), and 339–358 (FIII…ISTP).

The protein belongs to the cytochrome b family. In terms of assembly, the cytochrome bc1 complex contains 3 respiratory subunits (MT-CYB, CYC1 and UQCRFS1), 2 core proteins (UQCRC1 and UQCRC2) and probably 6 low-molecular weight proteins. Heme b serves as cofactor.

It is found in the mitochondrion inner membrane. Its function is as follows. Component of the ubiquinol-cytochrome c reductase complex (complex III or cytochrome b-c1 complex) that is part of the mitochondrial respiratory chain. The b-c1 complex mediates electron transfer from ubiquinol to cytochrome c. Contributes to the generation of a proton gradient across the mitochondrial membrane that is then used for ATP synthesis. This is Cytochrome b (MT-CYB) from Python sebae (African rock python).